We begin with the raw amino-acid sequence, 101 residues long: Small ribosomal subunit protein uS14 (101 aa).

A disordered region spans residues 46 to 72 (FELNRQPRDASPVRVRNRDSRDGRPRG). A compositionally biased stretch (basic and acidic residues) spans 61–70 (RNRDSRDGRP).

This sequence belongs to the universal ribosomal protein uS14 family. Part of the 30S ribosomal subunit. Contacts proteins S3 and S10.

Its function is as follows. Binds 16S rRNA, required for the assembly of 30S particles and may also be responsible for determining the conformation of the 16S rRNA at the A site. The sequence is that of Small ribosomal subunit protein uS14 from Corynebacterium diphtheriae (strain ATCC 700971 / NCTC 13129 / Biotype gravis).